A 351-amino-acid chain; its full sequence is GMP reductase (351 aa).

108–131 (EDFVKLKQILSLSSKLKYICIDVA) lines the NADP(+) pocket. K(+) contacts are provided by Gly181 and Gly183. The Thioimidate intermediate role is filled by Cys186. 216-239 (IISDGGCVVSGDIAKAFGGGADFV) is an NADP(+) binding site.

It belongs to the IMPDH/GMPR family. GuaC type 1 subfamily. As to quaternary structure, homotetramer.

The catalysed reaction is IMP + NH4(+) + NADP(+) = GMP + NADPH + 2 H(+). Catalyzes the irreversible NADPH-dependent deamination of GMP to IMP. It functions in the conversion of nucleobase, nucleoside and nucleotide derivatives of G to A nucleotides, and in maintaining the intracellular balance of A and G nucleotides. In Buchnera aphidicola subsp. Baizongia pistaciae (strain Bp), this protein is GMP reductase (guaC).